The sequence spans 119 residues: Small ribosomal subunit protein uS17 (119 aa).

Low complexity predominate over residues 1 to 21 (MAEAKTGAKATKSAAAGAADG). Residues 1-44 (MAEAKTGAKATKSAAAGAADGASKEKGPKHTPSTPKPRGRRKTR) form a disordered region.

This sequence belongs to the universal ribosomal protein uS17 family. As to quaternary structure, part of the 30S ribosomal subunit.

In terms of biological role, one of the primary rRNA binding proteins, it binds specifically to the 5'-end of 16S ribosomal RNA. This chain is Small ribosomal subunit protein uS17, found in Mycobacterium marinum (strain ATCC BAA-535 / M).